The sequence spans 807 residues: Histone transcription regulator slm9 (807 aa).

2 WD repeats span residues 62–100 (SFDSPISCIRFTYDGSCLAVATEAGTFLYHSEKWDKAFQ) and 102–140 (LSGPAYEVCWSQQGHILATSWKQISIYVKDEGLRTETIV). The disordered stretch occupies residues 144 to 164 (EHADSNHQPAVSIEESKEAVE). WD repeat units lie at residues 182-221 (GHHTFVGGLAFDPMGQFLASQSFDHTLKVWKLSTFGVEKS), 230-273 (PTGN…YDIN), 276-322 (GHQG…PMAV), and 326-367 (LSCS…EKMD). Residues 388-437 (NKNAAADRTTSPTQGQPESPSKSILLRPPPSIASSPESKRRKCPKKFVAR) are disordered. Residues 395-409 (RTTSPTQGQPESPSK) show a composition bias toward polar residues. 3 positions are modified to phosphoserine: serine 406, serine 421, and serine 422. Residues 426-435 (KRRKCPKKFV) are compositionally biased toward basic residues. WD repeat units lie at residues 492–526 (DCSWFSYLPNAIVLANGTSVFWAVATEDSSIYIYS) and 528–574 (AGRL…AIHS).

It belongs to the WD repeat HIR1 family. Interacts with hip1 and hip3.

Its subcellular location is the cytoplasm. The protein resides in the nucleus. Its function is as follows. Probably required for replication-independent chromatin assembly. Required for transcriptional silencing in the outer repeat (otr) centromeric repeats and the Tf2 long terminal repeat retrotransposons. May play an indirect role in the regulation of cdc2 and/or wee1 at the G2/M stage of mitosis. This is Histone transcription regulator slm9 (slm9) from Schizosaccharomyces pombe (strain 972 / ATCC 24843) (Fission yeast).